The primary structure comprises 428 residues: Glutamate-1-semialdehyde 2,1-aminomutase 1 (428 aa).

An N6-(pyridoxal phosphate)lysine modification is found at Lys-267.

This sequence belongs to the class-III pyridoxal-phosphate-dependent aminotransferase family. HemL subfamily. Homodimer. Pyridoxal 5'-phosphate is required as a cofactor.

It is found in the cytoplasm. It carries out the reaction (S)-4-amino-5-oxopentanoate = 5-aminolevulinate. Its pathway is porphyrin-containing compound metabolism; protoporphyrin-IX biosynthesis; 5-aminolevulinate from L-glutamyl-tRNA(Glu): step 2/2. The polypeptide is Glutamate-1-semialdehyde 2,1-aminomutase 1 (Staphylococcus aureus (strain MW2)).